Consider the following 363-residue polypeptide: MTKIYNLAILPGDGIGPELLQKDLNFKVLKEQYKLKINTTEYDIGGIAIDKYGKALPKETLDGCKESDSILFGSVGGPKWQHLPPDQQPERAALLPIRKYFNLFSNLRPAKLYSTLNHLSPLRRDISEKGFDILCVRELTGGIYFGKPKGYIKNIIDKKAFDTEIYYASEIKRIAHIGFKLAQNRKYKITSVDKANVLESSVLWRETVNTISKEYPDVKLSHLYIDHAAMQIIKNPDKFDVILTSNLFGDILSDECAMITGSIGMLPSASLNDSNFGLYEPAGGSAPDIAGKNIANPIAQILSIAMLVRYTMKLPMISDHIESAVIDTLKKGYRTLDIANDKEKYVSTNDIGDIISDILKKRI.

77-90 serves as a coordination point for NAD(+); that stretch reads GPKWQHLPPDQQPE. Residues Arg98, Arg108, Arg137, and Asp226 each coordinate substrate. Asp226, Asp250, and Asp254 together coordinate Mg(2+). NAD(+) is bound at residue 284–296; that stretch reads GSAPDIAGKNIAN.

It belongs to the isocitrate and isopropylmalate dehydrogenases family. LeuB type 1 subfamily. As to quaternary structure, homodimer. Mg(2+) is required as a cofactor. It depends on Mn(2+) as a cofactor.

Its subcellular location is the cytoplasm. It carries out the reaction (2R,3S)-3-isopropylmalate + NAD(+) = 4-methyl-2-oxopentanoate + CO2 + NADH. It participates in amino-acid biosynthesis; L-leucine biosynthesis; L-leucine from 3-methyl-2-oxobutanoate: step 3/4. Functionally, catalyzes the oxidation of 3-carboxy-2-hydroxy-4-methylpentanoate (3-isopropylmalate) to 3-carboxy-4-methyl-2-oxopentanoate. The product decarboxylates to 4-methyl-2 oxopentanoate. This Buchnera aphidicola subsp. Pemphigus spyrothecae protein is 3-isopropylmalate dehydrogenase.